The following is a 558-amino-acid chain: Tektin-5 (558 aa).

Residues 347–381 (ISEETDVKNKLQTQLAKILQEIFQAENTIMLLERA) adopt a coiled-coil conformation.

Belongs to the tektin family. Microtubule inner protein component of sperm flagellar doublet microtubules. Interacts with TEKT3. Post-translationally, ubiquitinated, leading to its degradation. Deubiquitinated by USP16, promoting its stability. Specifically expressed in testis.

The protein resides in the cytoplasm. It is found in the cytoskeleton. Its subcellular location is the flagellum axoneme. Its function is as follows. Sperm-specific microtubule inner protein (MIP) part of the dynein-decorated doublet microtubules (DMTs) in flagellar axoneme. Forms an extensive interaction network in different conformations that reinforces the helix bundle composed by other tektin proteins (TEKT1 to TEKT4) and MIPs to anchor the tektin bundle onto the tubulin wall of A-tubule of the sperm flagellum. The sequence is that of Tektin-5 from Rattus norvegicus (Rat).